Here is a 476-residue protein sequence, read N- to C-terminus: Methylenetetrahydrofolate--tRNA-(uracil-5-)-methyltransferase TrmFO (476 aa).

14 to 19 (GGGLAG) is an FAD binding site. The tract at residues 428–447 (LTEPPTHGADGKKLRGPEKS) is disordered. The span at 436–447 (ADGKKLRGPEKS) shows a compositional bias: basic and acidic residues.

This sequence belongs to the MnmG family. TrmFO subfamily. FAD is required as a cofactor.

The protein localises to the cytoplasm. The enzyme catalyses uridine(54) in tRNA + (6R)-5,10-methylene-5,6,7,8-tetrahydrofolate + NADH + H(+) = 5-methyluridine(54) in tRNA + (6S)-5,6,7,8-tetrahydrofolate + NAD(+). It carries out the reaction uridine(54) in tRNA + (6R)-5,10-methylene-5,6,7,8-tetrahydrofolate + NADPH + H(+) = 5-methyluridine(54) in tRNA + (6S)-5,6,7,8-tetrahydrofolate + NADP(+). Its function is as follows. Catalyzes the folate-dependent formation of 5-methyl-uridine at position 54 (M-5-U54) in all tRNAs. The protein is Methylenetetrahydrofolate--tRNA-(uracil-5-)-methyltransferase TrmFO of Rhodopseudomonas palustris (strain BisA53).